Here is an 85-residue protein sequence, read N- to C-terminus: uncharacterized protein (85 aa).

2 disordered regions span residues 1–22 (MFAP…TSGF) and 41–85 (EKER…SFLR). The span at 75–85 (FPSNYRGSFLR) shows a compositional bias: polar residues.

This is an uncharacterized protein from Dryophytes versicolor (chameleon treefrog).